A 398-amino-acid chain; its full sequence is Tear acid lipase-like protein (398 aa).

The signal sequence occupies residues 1–19; it reads MSWLLSTMCLVHVCGNIFC. The active-site Nucleophile is the Ser170. Cysteines 243 and 252 form a disulfide. Asn268 is a glycosylation site (N-linked (GlcNAc...) asparagine). Active-site charge relay system residues include Asp340 and His369.

Belongs to the AB hydrolase superfamily. Lipase family. As to quaternary structure, monomer. Post-translationally, N-glycosylated. In terms of tissue distribution, expressed in female lacrimal gland acinar cells from where it is secreted into tears (at protein level).

The protein resides in the secreted. Functionally, female-specific protein which lacks detectable lipase activity against a range of substrates. Binds the hydrophobic lipid 1-aminoanthracene with high affinity. The protein is Tear acid lipase-like protein of Mesocricetus auratus (Golden hamster).